The following is a 445-amino-acid chain: Hydroxycinnamoyl-CoA:5-hydroxyanthranilate N-hydroxycinnamoyltransferase HHT4 (445 aa).

The protein belongs to the plant acyltransferase family.

The enzyme catalyses 5-hydroxyanthranilate + (E)-4-coumaroyl-CoA = avenanthramide A + CoA. The catalysed reaction is 5-hydroxyanthranilate + (E)-caffeoyl-CoA = avenanthramide C + CoA. Functionally, involved in the biosynthesis of avenanthramide phytoalexins, which are phenolic alkaloids found mainly in oats. Catalyzes the N-acylation of 5-hydroxyanthranilate with 4-coumaroyl-CoA or caffeoyl-CoA as acyl donors, forming avenanthramide A and avenanthramide C, respectively. Does not accept feruloyl-CoA as a substrate. This Avena sativa (Oat) protein is Hydroxycinnamoyl-CoA:5-hydroxyanthranilate N-hydroxycinnamoyltransferase HHT4.